We begin with the raw amino-acid sequence, 389 residues long: DNA damage checkpoint control protein RAD17 (389 aa).

Residues 358–389 (LAPPSAFPAEETQDPDESYHPAPSNTDIPLFL) are disordered. Polar residues predominate over residues 380–389 (PSNTDIPLFL).

This sequence belongs to the rad1 family. In terms of assembly, component of the checkpoint clamp complex composed of DDC1, MEC3 and RAD17.

The protein resides in the nucleus. Functionally, component of the checkpoint clamp complex involved in the surveillance mechanism that allows the DNA repair pathways to act to restore the integrity of the DNA prior to DNA synthesis or separation of the replicated chromosomes. This Eremothecium gossypii (strain ATCC 10895 / CBS 109.51 / FGSC 9923 / NRRL Y-1056) (Yeast) protein is DNA damage checkpoint control protein RAD17 (RAD17).